The sequence spans 479 residues: UDP-glycosyltransferase 71B6 (479 aa).

UDP-alpha-D-glucose is bound by residues S275, 342 to 344 (AEQ), 359 to 367 (HGGWNSTLE), and 381 to 384 (YAEQ).

The protein belongs to the UDP-glycosyltransferase family.

Functionally, glucosyltransferase that glucosylates the (+) enantiomer of abscisic acid ((+)-ABA). Is not active on structural analogs with alterations to the 8'- and 9'- methyl groups. In Arabidopsis thaliana (Mouse-ear cress), this protein is UDP-glycosyltransferase 71B6 (UGT71B6).